Here is a 356-residue protein sequence, read N- to C-terminus: Photosynthetic reaction center cytochrome c subunit (356 aa).

Positions 1–20 are cleaved as a signal peptide; sequence MKQLIVNSVATVALASLVAG. Cysteine 21 carries the S-diacylglycerol cysteine lipid modification. Heme-binding residues include methionine 94, cysteine 107, cysteine 110, histidine 111, methionine 130, histidine 144, cysteine 152, cysteine 155, histidine 156, methionine 253, cysteine 264, cysteine 267, histidine 268, cysteine 325, cysteine 328, and histidine 329.

As to quaternary structure, component of the photosynthetic reaction center composed of protein subunits L (PufL), M (PufM), H (PuhA) and cytochrome C (PufC). Binds 4 heme groups per subunit. In terms of processing, after the signal sequence is removed, the N-terminal cysteine is modified to form a diacylglyceride thioether, but the alpha-amino group is free and is not N-palmitoylated.

It is found in the cellular chromatophore membrane. In terms of biological role, the reaction center of purple bacteria contains a tightly bound cytochrome molecule which re-reduces the photo oxidized primary electron donor. The polypeptide is Photosynthetic reaction center cytochrome c subunit (Blastochloris viridis (Rhodopseudomonas viridis)).